Consider the following 610-residue polypeptide: Elongation factor 4 (610 aa).

A tr-type G domain is found at 13 to 195 (SHIRNFSIVA…AIVHKLPAPK (183 aa)). GTP is bound by residues 25–30 (DHGKST) and 142–145 (NKID).

This sequence belongs to the TRAFAC class translation factor GTPase superfamily. Classic translation factor GTPase family. LepA subfamily.

It is found in the cell inner membrane. It catalyses the reaction GTP + H2O = GDP + phosphate + H(+). Its function is as follows. Required for accurate and efficient protein synthesis under certain stress conditions. May act as a fidelity factor of the translation reaction, by catalyzing a one-codon backward translocation of tRNAs on improperly translocated ribosomes. Back-translocation proceeds from a post-translocation (POST) complex to a pre-translocation (PRE) complex, thus giving elongation factor G a second chance to translocate the tRNAs correctly. Binds to ribosomes in a GTP-dependent manner. This is Elongation factor 4 from Rhizobium johnstonii (strain DSM 114642 / LMG 32736 / 3841) (Rhizobium leguminosarum bv. viciae).